The following is a 65-amino-acid chain: Large ribosomal subunit protein bL35 (65 aa).

A disordered region spans residues 1 to 52; the sequence is MPKMKSNRAAAKRFKRTANGGFKSGNSFTSHRFHGKTKKQRRQLRGLSMMDK. Residues 31-44 show a composition bias toward basic residues; that stretch reads HRFHGKTKKQRRQL.

The protein belongs to the bacterial ribosomal protein bL35 family.

The sequence is that of Large ribosomal subunit protein bL35 from Limosilactobacillus reuteri (strain DSM 20016) (Lactobacillus reuteri).